The primary structure comprises 392 residues: N-acetylneuraminate epimerase (392 aa).

An N-terminal signal peptide occupies residues 1–35 (MTQIYHQYKKKLSTKVILLSALTLCITFSLPYANA). Kelch repeat units follow at residues 56-100 (HLYV…VALS), 102-155 (KLYV…TTLN), 157-192 (TQAL…AVVN), 193-238 (AYFD…TAKK), 241-290 (LILI…LAGA), 312-361 (QQFN…QDKD), and 363-392 (VILL…LHLE). The active-site Proton acceptor is Glu247.

It belongs to the NanM family. As to quaternary structure, homodimer.

The protein resides in the periplasm. The catalysed reaction is N-acetyl-alpha-neuraminate = N-acetyl-beta-neuraminate. Its function is as follows. Converts alpha-N-acetylneuranimic acid (Neu5Ac) to the beta-anomer, accelerating the equilibrium between the alpha- and beta-anomers. Probably facilitates sialidase-negative bacteria to compete successfully for limited amounts of extracellular Neu5Ac, which is likely taken up in the beta-anomer. In addition, the rapid removal of sialic acid from solution might be advantageous to the bacterium to damp down host responses. This chain is N-acetylneuraminate epimerase, found in Yersinia enterocolitica serotype O:8 / biotype 1B (strain NCTC 13174 / 8081).